The chain runs to 211 residues: Probable GTP-binding protein EngB (211 aa).

Residues 22 to 195 form the EngB-type G domain; sequence PFPEVAFAGK…WQLIDSYVLP (174 aa). GTP contacts are provided by residues 30 to 37, 57 to 61, 75 to 78, 142 to 145, and 174 to 176; these read GKSNVGKS, GKTQT, DLPG, TKLD, and FSS. Positions 37 and 59 each coordinate Mg(2+).

Belongs to the TRAFAC class TrmE-Era-EngA-EngB-Septin-like GTPase superfamily. EngB GTPase family. It depends on Mg(2+) as a cofactor.

Its function is as follows. Necessary for normal cell division and for the maintenance of normal septation. This is Probable GTP-binding protein EngB from Lachnospira eligens (strain ATCC 27750 / DSM 3376 / VPI C15-48 / C15-B4) (Eubacterium eligens).